Reading from the N-terminus, the 634-residue chain is uncharacterized protein (634 aa).

The first 40 residues, 1-40, serve as a signal peptide directing secretion; sequence MWLQQRLKGLPGLLSSSWARRLLCLLGLLVLLLWFAGSGA. Topologically, residues 41 to 589 are extracellular; sequence RRAAGGLQLL…DEHMAQQDPG (549 aa). N-linked (GlcNAc...) asparagine glycosylation occurs at Asn-363. Residues 590–610 form a helical membrane-spanning segment; the sequence is LPFLFWFSVASLITLFHLFLF. Residues 611–634 lie on the Cytoplasmic side of the membrane; the sequence is KLIYNEYCGPGAKPFFRNKEDPSV.

It is found in the membrane. This is an uncharacterized protein from Bos taurus (Bovine).